We begin with the raw amino-acid sequence, 116 residues long: uncharacterized protein (116 aa).

The chain crosses the membrane as a helical span at residues 89–109; it reads VGFVILILLYILTNPNAIELI.

This sequence belongs to the M.jannaschii MJ0023/MJ0349/MJ1072/MJ1074/MJ1107/MJECL16 family.

The protein localises to the membrane. This is an uncharacterized protein from Methanocaldococcus jannaschii (strain ATCC 43067 / DSM 2661 / JAL-1 / JCM 10045 / NBRC 100440) (Methanococcus jannaschii).